The primary structure comprises 454 residues: tRNA modification GTPase MnmE (454 aa).

Positions 23, 80, and 120 each coordinate (6S)-5-formyl-5,6,7,8-tetrahydrofolate. The region spanning 216 to 377 is the TrmE-type G domain; the sequence is GMKVVIAGRP…LRNHLKQSMG (162 aa). K(+) is bound at residue Asn-226. Residues 226–231, 245–251, 270–273, 335–338, and 358–360 each bind GTP; these read NAGKSS, TDIAGTT, DTAG, NKAD, and SAR. Ser-230 provides a ligand contact to Mg(2+). Residues Thr-245, Ile-247, and Thr-250 each contribute to the K(+) site. Thr-251 contacts Mg(2+). Lys-454 is a (6S)-5-formyl-5,6,7,8-tetrahydrofolate binding site.

The protein belongs to the TRAFAC class TrmE-Era-EngA-EngB-Septin-like GTPase superfamily. TrmE GTPase family. As to quaternary structure, homodimer. Heterotetramer of two MnmE and two MnmG subunits. K(+) serves as cofactor.

The protein localises to the cytoplasm. Its function is as follows. Exhibits a very high intrinsic GTPase hydrolysis rate. Involved in the addition of a carboxymethylaminomethyl (cmnm) group at the wobble position (U34) of certain tRNAs, forming tRNA-cmnm(5)s(2)U34. The chain is tRNA modification GTPase MnmE from Escherichia coli O127:H6 (strain E2348/69 / EPEC).